Reading from the N-terminus, the 95-residue chain is IgNAR transmembrane form NE (95 aa).

Positions 1–36 (LTFSTRSLLNLPAVEWKSGAKYTCTASHSPSQSTVK) constitute an Ig-like domain. A compositionally biased stretch (polar residues) spans 24-35 (CTASHSPSQSTV). The disordered stretch occupies residues 24 to 79 (CTASHSPSQSTVKRVIRNPKESPKGSSETRKSPLEIMESPEDYGTEEDQLENVNED). Over residues 41-56 (NPKESPKGSSETRKSP) the composition is skewed to basic and acidic residues. The segment covering 61-77 (ESPEDYGTEEDQLENVN) has biased composition (acidic residues). Residue asparagine 81 is glycosylated (N-linked (GlcNAc...) asparagine).

In terms of tissue distribution, expressed mainly in lymphoid tissues including spleen, epigonal organ and circulating lymphocytes. Also expressed at low levels in the pancreas.

In Ginglymostoma cirratum (Nurse shark), this protein is IgNAR transmembrane form NE.